A 125-amino-acid polypeptide reads, in one-letter code: Small ribosomal subunit protein uS13 (125 aa).

The tract at residues 95 to 125 (GLPLRGQRTKTNARTRKGKRKTVANKKIASK) is disordered.

Belongs to the universal ribosomal protein uS13 family. In terms of assembly, part of the 30S ribosomal subunit. Forms a loose heterodimer with protein S19. Forms two bridges to the 50S subunit in the 70S ribosome.

Located at the top of the head of the 30S subunit, it contacts several helices of the 16S rRNA. In the 70S ribosome it contacts the 23S rRNA (bridge B1a) and protein L5 of the 50S subunit (bridge B1b), connecting the 2 subunits; these bridges are implicated in subunit movement. Contacts the tRNAs in the A and P-sites. This Borrelia garinii subsp. bavariensis (strain ATCC BAA-2496 / DSM 23469 / PBi) (Borreliella bavariensis) protein is Small ribosomal subunit protein uS13.